A 428-amino-acid chain; its full sequence is 3-deoxy-D-manno-octulosonic acid transferase (428 aa).

Glutamate 64 serves as the catalytic Proton acceptor. CMP contacts are provided by residues 274 to 275 (PR), 316 to 318 (LGE), and 342 to 345 (NLIE).

This sequence belongs to the glycosyltransferase group 1 family. Glycosyltransferase 30 subfamily.

It localises to the cell inner membrane. The enzyme catalyses lipid IVA (E. coli) + CMP-3-deoxy-beta-D-manno-octulosonate = alpha-Kdo-(2-&gt;6)-lipid IVA (E. coli) + CMP + H(+). Its pathway is bacterial outer membrane biogenesis; LPS core biosynthesis. Its function is as follows. Involved in lipopolysaccharide (LPS) biosynthesis. Catalyzes the transfer of a single 3-deoxy-D-manno-octulosonate (Kdo) residue from CMP-Kdo to lipid IV(A), the tetraacyldisaccharide-1,4'-bisphosphate precursor of lipid A. This Bordetella pertussis protein is 3-deoxy-D-manno-octulosonic acid transferase (waaA).